A 241-amino-acid chain; its full sequence is UDP-2,3-diacylglucosamine hydrolase (241 aa).

Positions 8, 10, 41, 79, and 114 each coordinate Mn(2+). Residue 79 to 80 coordinates substrate; sequence NR. Substrate is bound by residues D122, S160, K167, and H195. The Mn(2+) site is built by H195 and H197.

The protein belongs to the LpxH family. The cofactor is Mn(2+).

It is found in the cell inner membrane. The catalysed reaction is UDP-2-N,3-O-bis[(3R)-3-hydroxytetradecanoyl]-alpha-D-glucosamine + H2O = 2-N,3-O-bis[(3R)-3-hydroxytetradecanoyl]-alpha-D-glucosaminyl 1-phosphate + UMP + 2 H(+). Its pathway is glycolipid biosynthesis; lipid IV(A) biosynthesis; lipid IV(A) from (3R)-3-hydroxytetradecanoyl-[acyl-carrier-protein] and UDP-N-acetyl-alpha-D-glucosamine: step 4/6. Its function is as follows. Hydrolyzes the pyrophosphate bond of UDP-2,3-diacylglucosamine to yield 2,3-diacylglucosamine 1-phosphate (lipid X) and UMP by catalyzing the attack of water at the alpha-P atom. Involved in the biosynthesis of lipid A, a phosphorylated glycolipid that anchors the lipopolysaccharide to the outer membrane of the cell. This chain is UDP-2,3-diacylglucosamine hydrolase, found in Azotobacter vinelandii (strain DJ / ATCC BAA-1303).